We begin with the raw amino-acid sequence, 118 residues long: Large ribosomal subunit protein bL20 (118 aa).

This sequence belongs to the bacterial ribosomal protein bL20 family.

Functionally, binds directly to 23S ribosomal RNA and is necessary for the in vitro assembly process of the 50S ribosomal subunit. It is not involved in the protein synthesizing functions of that subunit. The chain is Large ribosomal subunit protein bL20 from Staphylococcus saprophyticus subsp. saprophyticus (strain ATCC 15305 / DSM 20229 / NCIMB 8711 / NCTC 7292 / S-41).